A 226-amino-acid chain; its full sequence is Phosphatidylserine decarboxylase proenzyme (226 aa).

Ser184 serves as the catalytic Schiff-base intermediate with substrate; via pyruvic acid. Ser184 carries the post-translational modification Pyruvic acid (Ser); by autocatalysis.

This sequence belongs to the phosphatidylserine decarboxylase family. PSD-A subfamily. In terms of assembly, heterodimer of a large membrane-associated beta subunit and a small pyruvoyl-containing alpha subunit. Requires pyruvate as cofactor. Post-translationally, is synthesized initially as an inactive proenzyme. Formation of the active enzyme involves a self-maturation process in which the active site pyruvoyl group is generated from an internal serine residue via an autocatalytic post-translational modification. Two non-identical subunits are generated from the proenzyme in this reaction, and the pyruvate is formed at the N-terminus of the alpha chain, which is derived from the carboxyl end of the proenzyme. The post-translation cleavage follows an unusual pathway, termed non-hydrolytic serinolysis, in which the side chain hydroxyl group of the serine supplies its oxygen atom to form the C-terminus of the beta chain, while the remainder of the serine residue undergoes an oxidative deamination to produce ammonia and the pyruvoyl prosthetic group on the alpha chain.

It localises to the cell membrane. The enzyme catalyses a 1,2-diacyl-sn-glycero-3-phospho-L-serine + H(+) = a 1,2-diacyl-sn-glycero-3-phosphoethanolamine + CO2. The protein operates within phospholipid metabolism; phosphatidylethanolamine biosynthesis; phosphatidylethanolamine from CDP-diacylglycerol: step 2/2. Catalyzes the formation of phosphatidylethanolamine (PtdEtn) from phosphatidylserine (PtdSer). The polypeptide is Phosphatidylserine decarboxylase proenzyme (Ehrlichia chaffeensis (strain ATCC CRL-10679 / Arkansas)).